A 441-amino-acid chain; its full sequence is Transducin-like enhancer protein 7 (441 aa).

2 disordered regions span residues 1–77 (MSGE…QWHL) and 91–119 (PDAQPGEAAESSPSFLLGSEVGQPYSSSS). Positions 27 to 49 (ESSGVSSQPEPQVQQQLGSLLGV) are enriched in low complexity. Residues 62–76 (PADQETSTVTQQQWH) are compositionally biased toward polar residues. The span at 108–119 (GSEVGQPYSSSS) shows a compositional bias: low complexity. WD repeat units follow at residues 156–194 (FHGKRVYAVAISGSTHHVYTCGSGYIRVWDESALHAGEK), 204–243 (HPQDRVVTCKLFPDERSLITGGASQAVTLWDLAPTPQVRA), 247–285 (STGPTCYSLAVSSDAHICLACFHGFVEIWDLQNQILIRK), 286–325 (HEVPVYGSRCVDITGNIFWTGGEDTILYSWDLRSYQRLHQ), and 409–441 (EESSGILCCDVSSDNQYLVMGSSSSATIYQLLY).

It belongs to the WD repeat Groucho/TLE family.

The polypeptide is Transducin-like enhancer protein 7 (Homo sapiens (Human)).